The chain runs to 45 residues: Photosystem II reaction center protein K (45 aa).

A propeptide spanning residues 1–8 is cleaved from the precursor; that stretch reads MEGILFLA. A helical membrane pass occupies residues 24–44; that stretch reads APVIPVFFLLLAFVWQAAVGF.

This sequence belongs to the PsbK family. As to quaternary structure, PSII is composed of 1 copy each of membrane proteins PsbA, PsbB, PsbC, PsbD, PsbE, PsbF, PsbH, PsbI, PsbJ, PsbK, PsbL, PsbM, PsbT, PsbX, PsbY, PsbZ, Psb30/Ycf12, at least 3 peripheral proteins of the oxygen-evolving complex and a large number of cofactors. It forms dimeric complexes.

Its subcellular location is the plastid. It localises to the chloroplast thylakoid membrane. One of the components of the core complex of photosystem II (PSII). PSII is a light-driven water:plastoquinone oxidoreductase that uses light energy to abstract electrons from H(2)O, generating O(2) and a proton gradient subsequently used for ATP formation. It consists of a core antenna complex that captures photons, and an electron transfer chain that converts photonic excitation into a charge separation. This is Photosystem II reaction center protein K from Guillardia theta (Cryptophyte).